We begin with the raw amino-acid sequence, 213 residues long: Glutathione S-transferase PARB (213 aa).

The 82-residue stretch at Met-1 to Gly-82 folds into the GST N-terminal domain. Residues Ser-11, Thr-12 to Ala-13, His-40 to Lys-41, Gln-53 to Val-54, and Glu-66 to Ser-67 each bind glutathione. A GST C-terminal domain is found at Asp-89–Lys-213.

This sequence belongs to the GST superfamily. Phi family.

It catalyses the reaction RX + glutathione = an S-substituted glutathione + a halide anion + H(+). In terms of biological role, conjugation of reduced glutathione to a wide number of exogenous and endogenous hydrophobic electrophiles. The protein is Glutathione S-transferase PARB of Nicotiana tabacum (Common tobacco).